Reading from the N-terminus, the 278-residue chain is 4-hydroxy-3-methylbut-2-enyl diphosphate reductase (278 aa).

[4Fe-4S] cluster is bound at residue C12. Positions 41 and 74 each coordinate (2E)-4-hydroxy-3-methylbut-2-enyl diphosphate. Dimethylallyl diphosphate contacts are provided by H41 and H74. Isopentenyl diphosphate is bound by residues H41 and H74. C96 lines the [4Fe-4S] cluster pocket. H124 is a binding site for (2E)-4-hydroxy-3-methylbut-2-enyl diphosphate. H124 contacts dimethylallyl diphosphate. H124 lines the isopentenyl diphosphate pocket. E126 serves as the catalytic Proton donor. T161 contacts (2E)-4-hydroxy-3-methylbut-2-enyl diphosphate. [4Fe-4S] cluster is bound at residue C189. Residues S217, N219, and S261 each coordinate (2E)-4-hydroxy-3-methylbut-2-enyl diphosphate. 3 residues coordinate dimethylallyl diphosphate: S217, N219, and S261. S217, N219, and S261 together coordinate isopentenyl diphosphate.

Belongs to the IspH family. It depends on [4Fe-4S] cluster as a cofactor.

The catalysed reaction is isopentenyl diphosphate + 2 oxidized [2Fe-2S]-[ferredoxin] + H2O = (2E)-4-hydroxy-3-methylbut-2-enyl diphosphate + 2 reduced [2Fe-2S]-[ferredoxin] + 2 H(+). It carries out the reaction dimethylallyl diphosphate + 2 oxidized [2Fe-2S]-[ferredoxin] + H2O = (2E)-4-hydroxy-3-methylbut-2-enyl diphosphate + 2 reduced [2Fe-2S]-[ferredoxin] + 2 H(+). The protein operates within isoprenoid biosynthesis; dimethylallyl diphosphate biosynthesis; dimethylallyl diphosphate from (2E)-4-hydroxy-3-methylbutenyl diphosphate: step 1/1. It functions in the pathway isoprenoid biosynthesis; isopentenyl diphosphate biosynthesis via DXP pathway; isopentenyl diphosphate from 1-deoxy-D-xylulose 5-phosphate: step 6/6. Its function is as follows. Catalyzes the conversion of 1-hydroxy-2-methyl-2-(E)-butenyl 4-diphosphate (HMBPP) into a mixture of isopentenyl diphosphate (IPP) and dimethylallyl diphosphate (DMAPP). Acts in the terminal step of the DOXP/MEP pathway for isoprenoid precursor biosynthesis. The protein is 4-hydroxy-3-methylbut-2-enyl diphosphate reductase of Anaeromyxobacter sp. (strain K).